Consider the following 109-residue polypeptide: Hainantoxin-XVIII (109 aa).

An N-terminal signal peptide occupies residues 1 to 18 (MKLSIIIIATSLVIAVVA). The propeptide occupies 19-46 (FPSKDSKAIENDKTEQRMEIVVQETARA). 4 cysteine pairs are disulfide-bonded: cysteine 47/cysteine 62, cysteine 55/cysteine 68, cysteine 59/cysteine 108, and cysteine 61/cysteine 81.

This sequence belongs to the neurotoxin 25 family. F7 subfamily. In terms of tissue distribution, expressed by the venom gland.

The protein localises to the secreted. Putative ion channel inhibitor. This is Hainantoxin-XVIII from Cyriopagopus hainanus (Chinese bird spider).